We begin with the raw amino-acid sequence, 83 residues long: Hainantoxin-III 11 (83 aa).

A signal peptide spans 1–21 (MKASMFLALAGLVLLFVVGYA). The propeptide occupies 22–48 (SESEEKDFPRELLSKIFAVDDFKGEER). Disulfide bonds link Cys-50–Cys-65, Cys-57–Cys-70, and Cys-64–Cys-77. Leu-81 carries the post-translational modification Leucine amide.

This sequence belongs to the neurotoxin 10 (Hwtx-1) family. 15 (Hntx-3) subfamily. As to quaternary structure, monomer. Expressed by the venom gland.

The protein localises to the secreted. Functionally, selective antagonist of neuronal tetrodotoxin (TTX)-sensitive voltage-gated sodium channels (IC(50)=1270 nM on Nav1.1/SCN1A, 270 nM on Nav1.2/SCN2A, 491 nM on Nav1.3/SCN3A and 232 nM on Nav1.7/SCN9A). This toxin suppress Nav1.7 current amplitude without significantly altering the activation, inactivation, and repriming kinetics. Short extreme depolarizations partially activate the toxin-bound channel, indicating voltage-dependent inhibition of this toxin. This toxin increases the deactivation of the Nav1.7 current after extreme depolarizations. The toxin-Nav1.7 complex is gradually dissociated upon prolonged strong depolarizations in a voltage-dependent manner, and the unbound toxin rebinds to Nav1.7 after a long repolarization. Moreover, analysis of chimeric channels showed that the DIIS3-S4 linker is critical for toxin binding to Nav1.7. These data are consistent with this toxin interacting with Nav1.7 site 4 and trapping the domain II voltage sensor in the closed state. This Cyriopagopus hainanus (Chinese bird spider) protein is Hainantoxin-III 11.